A 159-amino-acid polypeptide reads, in one-letter code: Afifavidin (159 aa).

The N-terminal stretch at 1 to 23 is a signal peptide; the sequence is MRRLASLAVALPLLAVVASPALA. In terms of domain architecture, Avidin-like spans 36–151; it reads GVPAVSSSWV…GSDTFTLVNK (116 aa). Biotin is bound by residues Asn46, Ser50, Tyr66, Asn68, and Gly74. Cys75 and Cys104 form a disulfide bridge. Residues Ser106, Thr108, and Asp144 each coordinate biotin.

This sequence belongs to the avidin/streptavidin family. In terms of assembly, exhibits a dynamic oligomeric assembly: the apo form self-assembles mostly into toroid-shaped homooctamers, with a small fraction of homodimers, yet upon biotin binding the intact afifavidin consists solely of the dimer.

It localises to the secreted. Functionally, the exact role played by afifavidin is still obscure. Forms a strong non-covalent complex with biotin and 2-iminobiotin. This chain is Afifavidin, found in Afifella pfennigii (Rhodobium pfennigii).